Reading from the N-terminus, the 336-residue chain is Fructose-1,6-bisphosphatase class 1 (336 aa).

Mg(2+)-binding residues include glutamate 90, aspartate 112, leucine 114, and aspartate 115. Substrate is bound by residues 115 to 118 (DGSS), asparagine 211, and lysine 277. Glutamate 283 is a binding site for Mg(2+).

Belongs to the FBPase class 1 family. As to quaternary structure, homotetramer. Requires Mg(2+) as cofactor.

It localises to the cytoplasm. It carries out the reaction beta-D-fructose 1,6-bisphosphate + H2O = beta-D-fructose 6-phosphate + phosphate. It participates in carbohydrate biosynthesis; gluconeogenesis. This Stutzerimonas stutzeri (strain A1501) (Pseudomonas stutzeri) protein is Fructose-1,6-bisphosphatase class 1.